Reading from the N-terminus, the 31-residue chain is Cytochrome b6-f complex subunit 6 (31 aa).

Residues 4-24 (LLSYFGLLLAALISTLVLFIG) traverse the membrane as a helical segment.

Belongs to the PetL family. In terms of assembly, the 4 large subunits of the cytochrome b6-f complex are cytochrome b6, subunit IV (17 kDa polypeptide, PetD), cytochrome f and the Rieske protein, while the 4 small subunits are PetG, PetL, PetM and PetN. The complex functions as a dimer.

It is found in the plastid. It localises to the chloroplast thylakoid membrane. In terms of biological role, component of the cytochrome b6-f complex, which mediates electron transfer between photosystem II (PSII) and photosystem I (PSI), cyclic electron flow around PSI, and state transitions. PetL is important for photoautotrophic growth as well as for electron transfer efficiency and stability of the cytochrome b6-f complex. The polypeptide is Cytochrome b6-f complex subunit 6 (Psilotum nudum (Whisk fern)).